A 212-amino-acid polypeptide reads, in one-letter code: Phosphatidylserine decarboxylase proenzyme (212 aa).

S182 (schiff-base intermediate with substrate; via pyruvic acid) is an active-site residue. S182 carries the pyruvic acid (Ser); by autocatalysis modification.

The protein belongs to the phosphatidylserine decarboxylase family. PSD-A subfamily. Heterodimer of a large membrane-associated beta subunit and a small pyruvoyl-containing alpha subunit. Requires pyruvate as cofactor. In terms of processing, is synthesized initially as an inactive proenzyme. Formation of the active enzyme involves a self-maturation process in which the active site pyruvoyl group is generated from an internal serine residue via an autocatalytic post-translational modification. Two non-identical subunits are generated from the proenzyme in this reaction, and the pyruvate is formed at the N-terminus of the alpha chain, which is derived from the carboxyl end of the proenzyme. The post-translation cleavage follows an unusual pathway, termed non-hydrolytic serinolysis, in which the side chain hydroxyl group of the serine supplies its oxygen atom to form the C-terminus of the beta chain, while the remainder of the serine residue undergoes an oxidative deamination to produce ammonia and the pyruvoyl prosthetic group on the alpha chain.

The protein localises to the cell membrane. It carries out the reaction a 1,2-diacyl-sn-glycero-3-phospho-L-serine + H(+) = a 1,2-diacyl-sn-glycero-3-phosphoethanolamine + CO2. Its pathway is phospholipid metabolism; phosphatidylethanolamine biosynthesis; phosphatidylethanolamine from CDP-diacylglycerol: step 2/2. In terms of biological role, catalyzes the formation of phosphatidylethanolamine (PtdEtn) from phosphatidylserine (PtdSer). The protein is Phosphatidylserine decarboxylase proenzyme of Chlorobium chlorochromatii (strain CaD3).